A 315-amino-acid polypeptide reads, in one-letter code: MGPPKIGQTVVVEVPSTTANIGPGFDCLGAALDLSNQFTIKRIEGNAERFELIMESTEGNHLRGGPENLFYRAAQRVWRTAGVEPVALEARVKLAVPPARGLGSSATAIVAGLVGANALAGYPLPKEKLLELAIDIEGHPDNVVPSLIGGLCVTAKTATDRWRVVRCDWDQSIKAVVAIPSIRLSTSEARRVMPENIPVNDAVINLGALTLLLQGLRTGNEDLIADGMHDKLHEPYRWGLIKGGLEVREAAKAAGALGCAISGAGPSILALCKATKGREVSVAMVKAWEAAGVASRAPLMSLQLTGSECISNTFG.

Pro97 to Thr107 is an ATP binding site.

The protein belongs to the GHMP kinase family. Homoserine kinase subfamily.

Its subcellular location is the cytoplasm. It carries out the reaction L-homoserine + ATP = O-phospho-L-homoserine + ADP + H(+). It functions in the pathway amino-acid biosynthesis; L-threonine biosynthesis; L-threonine from L-aspartate: step 4/5. Functionally, catalyzes the ATP-dependent phosphorylation of L-homoserine to L-homoserine phosphate. The polypeptide is Homoserine kinase (Prochlorococcus marinus (strain NATL1A)).